Consider the following 196-residue polypeptide: Small ribosomal subunit protein uS4c (196 aa).

The tract at residues 22 to 42 is disordered; that stretch reads TRKTPKSGSNPKKKFHSGKKE. The 81-residue stretch at 89–169 folds into the S4 RNA-binding domain; that stretch reads MRLDNILFRL…LPKHLTIDTL (81 aa).

Belongs to the universal ribosomal protein uS4 family. In terms of assembly, part of the 30S ribosomal subunit. Contacts protein S5. The interaction surface between S4 and S5 is involved in control of translational fidelity.

The protein localises to the plastid. Its subcellular location is the chloroplast. Functionally, one of the primary rRNA binding proteins, it binds directly to 16S rRNA where it nucleates assembly of the body of the 30S subunit. In terms of biological role, with S5 and S12 plays an important role in translational accuracy. This chain is Small ribosomal subunit protein uS4c (rps4), found in Melica altissima (Siberian melic grass).